Reading from the N-terminus, the 400-residue chain is MSDSFDRAPEQTKPQRAPPSSQDKIPQQNSESAMAKPQVVVAPVLMSKLSANAPEFYPSGYSSNYTESYEDGCEDYPTLSEYVQDFLNHLTEQPGSFETEIEQFAETLNGWVTTDDALQELVELIYQQATSIPNFSYMGARLCNYLSHHLTISPQSGNFRQLLLQRCRTEYEAKDQAAKGDEVTRKRFHAFVLFLGELYLNLEIKGTNGQVTRADILQVGLRELLNALFSNPMDDNLICAVKLLKLTGSVLEDTWKEKGKTDMEEIIQRIENVVLDANCSRDVKQMLLKLVELRSSNWGRVHATSTYREATPENDPNYFMNEPTFYTSDGVPFTAADPDYQEKYQELLEREDFFPDYEENGTDLSGAGDPYLDDIDDEMDPEIEEAYEKFCLESERKRKQ.

Residues 1 to 10 (MSDSFDRAPE) are compositionally biased toward basic and acidic residues. Residues 1–36 (MSDSFDRAPEQTKPQRAPPSSQDKIPQQNSESAMAK) form a disordered region. Residues 12 to 32 (TKPQRAPPSSQDKIPQQNSES) are compositionally biased toward polar residues. A PABPC1-interacting motif-2 (PAM2) region spans residues 37–64 (PQVVVAPVLMSKLSANAPEFYPSGYSSN). The tract at residues 78–296 (TLSEYVQDFL…LLKLVELRSS (219 aa)) is PAIP1 middle domain (PAIP1M). The MIF4G domain maps to 80 to 297 (SEYVQDFLNH…LKLVELRSSN (218 aa)). Residues 356–376 (DYEENGTDLSGAGDPYLDDID) are disordered. The PABPC1-interacting motif-1 (PAM1) stretch occupies residues 361-400 (GTDLSGAGDPYLDDIDDEMDPEIEEAYEKFCLESERKRKQ).

Interacts with the RRM1-RRM2 and C-terminus regions of PABPC1 in a 1:1 stoichiometry. Interacts with EIF4A.

It is found in the cytoplasm. In terms of biological role, acts as a coactivator in the regulation of translation initiation of poly(A)-containing mRNAs. Its stimulatory activity on translation is mediated via its action on PABPC1. Competes with PAIP2 for binding to PABPC1. Its association with EIF4A and PABPC1 may potentiate contacts between mRNA termini. May also be involved in translationally coupled mRNA turnover. Implicated with other RNA-binding proteins in the cytoplasmic deadenylation/translational and decay interplay of the FOS mRNA mediated by the major coding-region determinant of instability (mCRD) domain. The chain is Polyadenylate-binding protein-interacting protein 1 (Paip1) from Mus musculus (Mouse).